We begin with the raw amino-acid sequence, 180 residues long: ATP synthase subunit delta (180 aa).

Belongs to the ATPase delta chain family. As to quaternary structure, F-type ATPases have 2 components, F(1) - the catalytic core - and F(0) - the membrane proton channel. F(1) has five subunits: alpha(3), beta(3), gamma(1), delta(1), epsilon(1). F(0) has three main subunits: a(1), b(2) and c(10-14). The alpha and beta chains form an alternating ring which encloses part of the gamma chain. F(1) is attached to F(0) by a central stalk formed by the gamma and epsilon chains, while a peripheral stalk is formed by the delta and b chains.

Its subcellular location is the cell inner membrane. Its function is as follows. F(1)F(0) ATP synthase produces ATP from ADP in the presence of a proton or sodium gradient. F-type ATPases consist of two structural domains, F(1) containing the extramembraneous catalytic core and F(0) containing the membrane proton channel, linked together by a central stalk and a peripheral stalk. During catalysis, ATP synthesis in the catalytic domain of F(1) is coupled via a rotary mechanism of the central stalk subunits to proton translocation. Functionally, this protein is part of the stalk that links CF(0) to CF(1). It either transmits conformational changes from CF(0) to CF(1) or is implicated in proton conduction. This is ATP synthase subunit delta from Chlorobium phaeobacteroides (strain BS1).